The following is a 319-amino-acid chain: GATA transcription factor 18 (319 aa).

Over residues 1-15 (MPDAAAAAAAAQDAD) the composition is skewed to low complexity. Residues 1–74 (MPDAAAAAAA…AAPEPVSALL (74 aa)) are disordered. Acidic residues predominate over residues 32-60 (NNDDDGDDGTEEDEEEDDDEEGDEEELPP). In terms of domain architecture, Tify spans 74–109 (LPGSPNQLTLLFQGEVYVFESVTPEKVQAVLLLLGS). Positions 143-185 (RVASLIRFREKRKERNFDKKIRYAVRKEVALRMQRRKGQFAGR) constitute a CCT domain. A GATA-type zinc finger spans residues 215–242 (CQNCGTSEKMTPAMRRGPAGPRTLCNAC). The segment at 292-319 (ITASHGEVMGDSTPANEAEIGAPKAQSQ) is disordered.

This sequence belongs to the type IV zinc-finger family. Class C subfamily.

Its subcellular location is the nucleus. Functionally, transcriptional activator that specifically binds 5'-GATA-3' or 5'-GAT-3' motifs within gene promoters. The chain is GATA transcription factor 18 from Oryza sativa subsp. indica (Rice).